The chain runs to 530 residues: DNA damage-binding protein cmr1 (530 aa).

Disordered regions lie at residues 34–115 and 224–250; these read VGLF…RKSD and TKPV…LTTL. A compositionally biased stretch (basic residues) spans 52–62; the sequence is AKKKKPAPKKV. Residues 89-108 are compositionally biased toward basic and acidic residues; it reads EVAKRKADEHDAALQEAERA. One copy of the WD 1 repeat lies at 188–229; the sequence is LTPERIYAMTFHPSESKPLIFAGDKMGHLGVLDASQTKPVSA. Residues 233–244 are compositionally biased toward acidic residues; the sequence is DEDEEDDDDDPD. WD repeat units follow at residues 252–292, 302–339, 344–384, 389–430, 453–496, and 499–530; these read PHTR…SVER, VPIS…QDSA, LSDK…HKSP, EHES…ASWK, GRWV…LAQL, and DGIT…CLWM.

This sequence belongs to the WD repeat DDB2/WDR76 family.

DNA-binding protein that binds to both single- and double-stranded DNA. Binds preferentially to UV-damaged DNA. May be involved in DNA-metabolic processes. The sequence is that of DNA damage-binding protein cmr1 from Aspergillus terreus (strain NIH 2624 / FGSC A1156).